We begin with the raw amino-acid sequence, 152 residues long: Cytochrome c-type biogenesis CcmH-like mitochondrial protein (152 aa).

Topologically, residues Met1–Gln83 are mitochondrial intermembrane. Heme-binding residues include Cys26 and Cys29. A helical transmembrane segment spans residues Thr84–Tyr104. The Mitochondrial matrix segment spans residues Gln105–Lys152.

The protein belongs to the CcmH/CycL/Ccl2/NrfF family.

The protein resides in the mitochondrion inner membrane. Functionally, plays a role in mitochondrial cytochrome c maturation. Probable component of a heme lyase complex involved in the reduction of apocytochrome c. In Oryza sativa subsp. japonica (Rice), this protein is Cytochrome c-type biogenesis CcmH-like mitochondrial protein.